The chain runs to 220 residues: RNA-free ribonuclease P (220 aa).

This sequence belongs to the HARP family.

It catalyses the reaction Endonucleolytic cleavage of RNA, removing 5'-extranucleotides from tRNA precursor.. RNA-free RNase P that catalyzes the removal of the 5'-leader sequence from pre-tRNA to produce the mature 5'-terminus. In Methanothermobacter thermautotrophicus (strain ATCC 29096 / DSM 1053 / JCM 10044 / NBRC 100330 / Delta H) (Methanobacterium thermoautotrophicum), this protein is RNA-free ribonuclease P.